Reading from the N-terminus, the 66-residue chain is MKEGIHPKYNEVTVKCACGNSFQTRSTRTEISTEICSACHPFFTGKQKLVDTAGRVERFRKKYGMQ.

Zn(2+)-binding residues include Cys-16, Cys-18, Cys-36, and Cys-39.

The protein belongs to the bacterial ribosomal protein bL31 family. Type A subfamily. Part of the 50S ribosomal subunit. The cofactor is Zn(2+).

Its function is as follows. Binds the 23S rRNA. The protein is Large ribosomal subunit protein bL31 of Geobacter metallireducens (strain ATCC 53774 / DSM 7210 / GS-15).